The sequence spans 238 residues: 1-(5-phosphoribosyl)-5-[(5-phosphoribosylamino)methylideneamino] imidazole-4-carboxamide isomerase (238 aa).

Catalysis depends on Asp8, which acts as the Proton acceptor. The Proton donor role is filled by Asp129.

Belongs to the HisA/HisF family.

It is found in the cytoplasm. The enzyme catalyses 1-(5-phospho-beta-D-ribosyl)-5-[(5-phospho-beta-D-ribosylamino)methylideneamino]imidazole-4-carboxamide = 5-[(5-phospho-1-deoxy-D-ribulos-1-ylimino)methylamino]-1-(5-phospho-beta-D-ribosyl)imidazole-4-carboxamide. Its pathway is amino-acid biosynthesis; L-histidine biosynthesis; L-histidine from 5-phospho-alpha-D-ribose 1-diphosphate: step 4/9. The chain is 1-(5-phosphoribosyl)-5-[(5-phosphoribosylamino)methylideneamino] imidazole-4-carboxamide isomerase from Clostridium kluyveri (strain NBRC 12016).